The sequence spans 220 residues: Transcriptional regulatory protein SpaR (220 aa).

The Response regulatory domain occupies Lys3–Leu115. Asp51 bears the 4-aspartylphosphate mark. Positions Gln124 to Glu220 form a DNA-binding region, ompR/PhoB-type.

Phosphorylated by SpaK.

It localises to the cytoplasm. In terms of biological role, member of the two-component regulatory system SpaK/SpaR involved in the regulation of the biosynthesis of lantibiotic subtilin. SpaR may function as a regulatory protein. The chain is Transcriptional regulatory protein SpaR (spaR) from Bacillus subtilis.